Here is a 237-residue protein sequence, read N- to C-terminus: Aspartate/glutamate leucyltransferase (237 aa).

It belongs to the R-transferase family. Bpt subfamily.

The protein localises to the cytoplasm. The enzyme catalyses N-terminal L-glutamyl-[protein] + L-leucyl-tRNA(Leu) = N-terminal L-leucyl-L-glutamyl-[protein] + tRNA(Leu) + H(+). It catalyses the reaction N-terminal L-aspartyl-[protein] + L-leucyl-tRNA(Leu) = N-terminal L-leucyl-L-aspartyl-[protein] + tRNA(Leu) + H(+). Functionally, functions in the N-end rule pathway of protein degradation where it conjugates Leu from its aminoacyl-tRNA to the N-termini of proteins containing an N-terminal aspartate or glutamate. The protein is Aspartate/glutamate leucyltransferase of Marinobacter nauticus (strain ATCC 700491 / DSM 11845 / VT8) (Marinobacter aquaeolei).